The following is a 264-amino-acid chain: MVKRHIGSWILVLFVVMWSDVGLCKKRPKPGGGWNTGGSRYPGQGSPGGNRYPSQGGGGWGQPHGGGWGQPHGGGWGQPHGGGWGQPHGGGWGQPHGGGGWGQGGTHSQWNKPSKPKTNMKHMAGAAAAGAVVGGLGGYMLGSAMSRPLIHFGNDYEDRYYRENMHRYPNQVYYRPVDQYSNQNNFVHDCVNITVKEHTVTTTTKGENFTETDIKMMERVVEQMCITQYQRESQAYYQRGASVILFSSPPVILLISLLIFLIVG.

An N-terminal signal peptide occupies residues 1 to 24 (MVKRHIGSWILVLFVVMWSDVGLC). An interaction with GRB2, ERI3 and SYN1 region spans residues 25 to 241 (KKRPKPGGGW…ESQAYYQRGA (217 aa)). Residues 27–119 (RPKPGGGWNT…WNKPSKPKTN (93 aa)) form a disordered region. Tandem repeats lie at residues 54–62 (SQGGGGWGQ), 63–70 (PHGGGWGQ), 71–78 (PHGGGWGQ), 79–86 (PHGGGWGQ), 87–94 (PHGGGWGQ), and 95–103 (PHGGGGWGQ). A 6 X 8 AA tandem repeats of P-H-G-G-G-W-G-Q region spans residues 54–103 (SQGGGGWGQPHGGGWGQPHGGGWGQPHGGGWGQPHGGGWGQPHGGGGWGQ). Gly residues predominate over residues 55–105 (QGGGGWGQPHGGGWGQPHGGGWGQPHGGGWGQPHGGGWGQPHGGGGWGQGG). Cu(2+)-binding residues include H72, G73, G74, H80, G81, G82, H88, G89, G90, H96, G98, and G99. A disulfide bridge links C190 with C225. Residues N192 and N208 are each glycosylated (N-linked (GlcNAc...) asparagine). Residue A241 is the site of GPI-anchor amidated alanine attachment. Residues 242–264 (SVILFSSPPVILLISLLIFLIVG) constitute a propeptide, removed in mature form.

Belongs to the prion family. Monomer and homodimer. Has a tendency to aggregate into amyloid fibrils containing a cross-beta spine, formed by a steric zipper of superposed beta-strands. Soluble oligomers may represent an intermediate stage on the path to fibril formation. Copper binding may promote oligomerization. Interacts with GRB2, APP, ERI3/PRNPIP and SYN1. Mislocalized cytosolically exposed PrP interacts with MGRN1; this interaction alters MGRN1 subcellular location and causes lysosomal enlargement. Interacts with KIAA1191.

It is found in the cell membrane. The protein resides in the golgi apparatus. Functionally, its primary physiological function is unclear. Has cytoprotective activity against internal or environmental stresses. May play a role in neuronal development and synaptic plasticity. May be required for neuronal myelin sheath maintenance. May play a role in iron uptake and iron homeostasis. Soluble oligomers are toxic to cultured neuroblastoma cells and induce apoptosis (in vitro). Association with GPC1 (via its heparan sulfate chains) targets PRNP to lipid rafts. Also provides Cu(2+) or Zn(2+) for the ascorbate-mediated GPC1 deaminase degradation of its heparan sulfate side chains. The polypeptide is Major prion protein (PRNP) (Bubalus bubalis (Domestic water buffalo)).